The sequence spans 359 residues: GTP 3',8-cyclase (359 aa).

The 228-residue stretch at 33–260 (RFGRRHDSLR…PTGRENPSAP (228 aa)) folds into the Radical SAM core domain. Arginine 42 is a binding site for GTP. [4Fe-4S] cluster-binding residues include cysteine 49 and cysteine 53. S-adenosyl-L-methionine is bound at residue tyrosine 55. Residue cysteine 56 coordinates [4Fe-4S] cluster. Residue arginine 93 participates in GTP binding. Residue glycine 97 coordinates S-adenosyl-L-methionine. A GTP-binding site is contributed by threonine 124. Serine 148 contacts S-adenosyl-L-methionine. Lysine 185 contacts GTP. Methionine 219 contributes to the S-adenosyl-L-methionine binding site. Cysteine 286 and cysteine 289 together coordinate [4Fe-4S] cluster. 291–293 (RLR) contributes to the GTP binding site. Residue cysteine 303 participates in [4Fe-4S] cluster binding.

Belongs to the radical SAM superfamily. MoaA family. As to quaternary structure, monomer and homodimer. [4Fe-4S] cluster serves as cofactor.

The catalysed reaction is GTP + AH2 + S-adenosyl-L-methionine = (8S)-3',8-cyclo-7,8-dihydroguanosine 5'-triphosphate + 5'-deoxyadenosine + L-methionine + A + H(+). It participates in cofactor biosynthesis; molybdopterin biosynthesis. In terms of biological role, catalyzes the cyclization of GTP to (8S)-3',8-cyclo-7,8-dihydroguanosine 5'-triphosphate. This chain is GTP 3',8-cyclase, found in Rhodopirellula baltica (strain DSM 10527 / NCIMB 13988 / SH1).